The chain runs to 76 residues: UPF0346 protein LBA0976 (76 aa).

The protein belongs to the UPF0346 family.

In Lactobacillus acidophilus (strain ATCC 700396 / NCK56 / N2 / NCFM), this protein is UPF0346 protein LBA0976.